The following is a 201-amino-acid chain: CASP-like protein 2D1 (201 aa).

Residues 1 to 26 (MRSGEGSTAAAAAAEEEKVKVAAPFR) lie on the Cytoplasmic side of the membrane. A helical membrane pass occupies residues 27–47 (LAELGLRVCAVPLAVASVWEM). The Extracellular portion of the chain corresponds to 48 to 70 (ATNKQVDETYGEVRFSDLSGFRY). The helical transmembrane segment at 71-91 (LVWINAITAAYSVASILLSSC) threads the bilayer. Over 92-98 (RFITRFD) the chain is Cytoplasmic. The chain crosses the membrane as a helical span at residues 99-119 (WLIFILDQASAYLLLTSASAA). Topologically, residues 120 to 148 (AEVVYLAREGDREVSWGEVCSYFGRFCGA) are extracellular. Residues 149-169 (ATVSVALNAAALLCFMALSLI) form a helical membrane-spanning segment. Residues 170–201 (SAFRVFTKFNPPSQSNSKQQLSQEQGKPVVSG) lie on the Cytoplasmic side of the membrane. A compositionally biased stretch (polar residues) spans 180–194 (PPSQSNSKQQLSQEQ). A disordered region spans residues 180 to 201 (PPSQSNSKQQLSQEQGKPVVSG).

Belongs to the Casparian strip membrane proteins (CASP) family. In terms of assembly, homodimer and heterodimers.

The protein resides in the cell membrane. The chain is CASP-like protein 2D1 from Oryza sativa subsp. indica (Rice).